The primary structure comprises 302 residues: Calpain-1 catalytic subunit (302 aa).

The tract at residues 1–114 (RESGCSFVLA…KRAGTQELDD (114 aa)) is domain III. The linker stretch occupies residues 115 to 130 (QIQANLPDEQVLSAEE). Positions 131-301 (IDENFKALFR…LFKWLQLTMF (171 aa)) are domain IV. 3 EF-hand domains span residues 173-206 (FSME…NRIR), 203-238 (NRIR…AGFK), and 268-302 (VRLE…TMFA). Ca(2+) is bound by residues Asp-186, Asp-188, Asn-190, Lys-192, Glu-197, Asp-216, Asp-218, Ser-220, Ser-222, and Glu-227.

The protein belongs to the peptidase C2 family. As to quaternary structure, forms a heterodimer with a small (regulatory) subunit CAPNS1. Ca(2+) serves as cofactor. The N-terminus is blocked. Post-translationally, undergoes calcium-induced successive autoproteolytic cleavages that generate a membrane-bound 78 kDa active form and an intracellular 75 kDa active form. Calpastatin reduces with high efficiency the transition from 78 kDa to 75 kDa calpain forms. Ubiquitous.

The protein localises to the cytoplasm. It is found in the cell membrane. The enzyme catalyses Broad endopeptidase specificity.. Its activity is regulated as follows. Activated by micromolar concentrations of calcium and inhibited by calpastatin. Calcium-regulated non-lysosomal thiol-protease which catalyzes limited proteolysis of substrates involved in cytoskeletal remodeling and signal transduction. Proteolytically cleaves CTBP1. Cleaves and activates caspase-7 (CASP7). The polypeptide is Calpain-1 catalytic subunit (Oryctolagus cuniculus (Rabbit)).